The primary structure comprises 290 residues: 7-methylguanosine phosphate-specific 5'-nucleotidase A (290 aa).

Aspartate 39 acts as the Nucleophile in catalysis. Residues aspartate 39 and aspartate 41 each contribute to the Mg(2+) site. Aspartate 41 (proton donor) is an active-site residue. CMP is bound at residue glutamate 86. Glutamate 86 serves as a coordination point for N(7)-methyl-GMP. Residues 154 to 155 and lysine 203 contribute to the substrate site; that span reads SA. Residue aspartate 228 coordinates Mg(2+).

It belongs to the pyrimidine 5'-nucleotidase family. Monomer.

Its subcellular location is the cytoplasm. It catalyses the reaction N(7)-methyl-GMP + H2O = N(7)-methylguanosine + phosphate. The catalysed reaction is CMP + H2O = cytidine + phosphate. It carries out the reaction a ribonucleoside 5'-phosphate + H2O = a ribonucleoside + phosphate. Functionally, specifically hydrolyzes 7-methylguanosine monophosphate (m(7)GMP) to 7-methylguanosine and inorganic phosphate. The specific activity for m(7)GMP may protect cells against undesired salvage of m(7)GMP and its incorporation into nucleic acids. Also has weak activity for CMP. UMP and purine nucleotides are poor substrates. The polypeptide is 7-methylguanosine phosphate-specific 5'-nucleotidase A (Nt5c3b-a) (Xenopus laevis (African clawed frog)).